Here is a 348-residue protein sequence, read N- to C-terminus: Dihydroorotase (348 aa).

His14 and His16 together coordinate Zn(2+). Residues His16–Arg18 and Asn42 each bind substrate. Lys100, His137, and His175 together coordinate Zn(2+). At Lys100 the chain carries N6-carboxylysine. His137 serves as a coordination point for substrate. Leu220 contacts substrate. Position 248 (Asp248) interacts with Zn(2+). Asp248 is a catalytic residue. 2 residues coordinate substrate: His252 and Ala264.

It belongs to the metallo-dependent hydrolases superfamily. DHOase family. Class II DHOase subfamily. As to quaternary structure, homodimer. Zn(2+) is required as a cofactor.

It catalyses the reaction (S)-dihydroorotate + H2O = N-carbamoyl-L-aspartate + H(+). Its pathway is pyrimidine metabolism; UMP biosynthesis via de novo pathway; (S)-dihydroorotate from bicarbonate: step 3/3. Functionally, catalyzes the reversible cyclization of carbamoyl aspartate to dihydroorotate. The sequence is that of Dihydroorotase from Pseudomonas putida (strain GB-1).